The sequence spans 350 residues: Protein-glutamate methylesterase/protein-glutamine glutaminase (350 aa).

Positions 5-122 constitute a Response regulatory domain; sequence KVLCVDDSAL…RDGLIEYSEV (118 aa). Residue Asp-56 is modified to 4-aspartylphosphate. The 195-residue stretch at 152 to 346 folds into the CheB-type methylesterase domain; sequence PFASSEKLVI…ERILTRLGDR (195 aa). Active-site residues include Ser-165, His-191, and Asp-288.

Belongs to the CheB family. Phosphorylated by CheA. Phosphorylation of the N-terminal regulatory domain activates the methylesterase activity.

Its subcellular location is the cytoplasm. The catalysed reaction is [protein]-L-glutamate 5-O-methyl ester + H2O = L-glutamyl-[protein] + methanol + H(+). The enzyme catalyses L-glutaminyl-[protein] + H2O = L-glutamyl-[protein] + NH4(+). In terms of biological role, involved in chemotaxis. Part of a chemotaxis signal transduction system that modulates chemotaxis in response to various stimuli. Catalyzes the demethylation of specific methylglutamate residues introduced into the chemoreceptors (methyl-accepting chemotaxis proteins or MCP) by CheR. Also mediates the irreversible deamidation of specific glutamine residues to glutamic acid. The chain is Protein-glutamate methylesterase/protein-glutamine glutaminase from Bordetella pertussis (strain Tohama I / ATCC BAA-589 / NCTC 13251).